We begin with the raw amino-acid sequence, 23 residues long: Alpha-amanitin proprotein (23 aa).

(3R,4R)-4,5-dihydroxyisoleucine; in form alpha-amanitin is present on Ile1. At Ile1 the chain carries (3R,4S)-4-hydroxyisoleucine; in form gamma-amanitin. The segment at residues 1–8 (IWGIGCNP) is a cross-link (cyclopeptide (Ile-Pro)). A cross-link (2'-cysteinyl-6'-hydroxytryptophan sulfoxide (Trp-Cys)) is located at residues 2–6 (WGIGC). Pro8 carries the post-translational modification 4-hydroxyproline. The propeptide occupies 9–23 (CVGDEVTALITRGEA).

Belongs to the MSDIN fungal toxin family. Processed by the macrocyclase-peptidase enzyme POPB to yield a toxic cyclic decapeptide. POPB first removes 10 residues from the N-terminus. Conformational trapping of the remaining peptide forces the enzyme to release this intermediate rather than proceed to macrocyclization. The enzyme rebinds the remaining peptide in a different conformation and catalyzes macrocyclization of the N-terminal 8 residues.

Functionally, major toxin belonging to the bicyclic octapeptides amatoxins that acts by binding non-competitively to RNA polymerase II and greatly slowing the elongation of transcripts from target promoters. In Amanita fuligineoides, this protein is Alpha-amanitin proprotein.